The sequence spans 682 residues: Activating transcription factor 7-interacting protein 2 (682 aa).

The disordered stretch occupies residues 120 to 148; that stretch reads SRTTESPSRVFTEEAKDSLNTSENDSEHQ. Positions 137–148 are enriched in polar residues; it reads SLNTSENDSEHQ. Positions 328–378 form a coiled coil; the sequence is EIYSINYELFDKKLKELNQRIGKTECRNKHEGIADKLLAKIAKLQRRIKTV. Ser-416 bears the Phosphoserine mark. Polar residues-rich tracts occupy residues 418–451 and 462–490; these read IEKS…VSES and ESPN…NSPN. 2 disordered regions span residues 418-491 and 513-538; these read IEKS…SPNA and NCNT…ETTP. Residues Ser-488 and Ser-521 each carry the phosphoserine modification. Over residues 528–538 the composition is skewed to polar residues; that stretch reads KAASNSKETTP. In terms of domain architecture, Fibronectin type-III spans 575–680; it reads PPQKPELKVK…IKSIPGFSEN (106 aa).

It belongs to the MCAF family. In terms of assembly, interacts with MBD1, SETDB1 and SP1. Probably forms a complex with SETDB1 and MBD1.

The protein localises to the nucleus. Functionally, recruiter that couples transcriptional factors to general transcription apparatus and thereby modulates transcription regulation and chromatin formation. Can both act as an activator or a repressor depending on the context. Mediates MBD1-dependent transcriptional repression, probably by recruiting complexes containing SETDB1. The complex formed with MBD1 and SETDB1 represses transcription and probably couples DNA methylation and histone H3 'Lys-9' trimethylation (H3K9me3) activity. This is Activating transcription factor 7-interacting protein 2 (ATF7IP2) from Homo sapiens (Human).